Consider the following 79-residue polypeptide: Raniseptin-9 (79 aa).

A signal peptide spans 1–22 (MAFLKKSLFLVLFLGIVSLSIC). Positions 23 to 49 (EEEKREGEEEEKQEEENEELSEEELRE) are excised as a propeptide. The segment at 27–46 (REGEEEEKQEEENEELSEEE) is disordered. A compositionally biased stretch (acidic residues) spans 30-44 (EEEEKQEEENEELSE).

It belongs to the frog skin active peptide (FSAP) family. Dermaseptin subfamily. As to expression, expressed by the skin glands.

It localises to the secreted. Functionally, has antibacterial activity. This Boana raniceps (Chaco tree frog) protein is Raniseptin-9.